The following is a 171-amino-acid chain: Nicotinamide-nucleotide adenylyltransferase (171 aa).

The protein belongs to the archaeal NMN adenylyltransferase family.

It is found in the cytoplasm. It carries out the reaction beta-nicotinamide D-ribonucleotide + ATP + H(+) = diphosphate + NAD(+). It participates in cofactor biosynthesis; NAD(+) biosynthesis; NAD(+) from nicotinamide D-ribonucleotide: step 1/1. The sequence is that of Nicotinamide-nucleotide adenylyltransferase from Methanococcus maripaludis (strain C6 / ATCC BAA-1332).